Here is a 547-residue protein sequence, read N- to C-terminus: Chaperonin GroEL (547 aa).

ATP is bound by residues 30–33 (TLGP), lysine 51, 87–91 (DGTTT), glycine 415, and aspartate 495.

It belongs to the chaperonin (HSP60) family. In terms of assembly, forms a cylinder of 14 subunits composed of two heptameric rings stacked back-to-back. Interacts with the co-chaperonin GroES.

It is found in the cytoplasm. The enzyme catalyses ATP + H2O + a folded polypeptide = ADP + phosphate + an unfolded polypeptide.. Its function is as follows. Together with its co-chaperonin GroES, plays an essential role in assisting protein folding. The GroEL-GroES system forms a nano-cage that allows encapsulation of the non-native substrate proteins and provides a physical environment optimized to promote and accelerate protein folding. This Shewanella halifaxensis (strain HAW-EB4) protein is Chaperonin GroEL.